We begin with the raw amino-acid sequence, 262 residues long: Probable esterase azaC (262 aa).

Residues Ser119, Asp188, and His216 each act as charge relay system in the active site.

The protein belongs to the LovG family.

It functions in the pathway secondary metabolite biosynthesis. Functionally, probable esterase; part of the gene cluster that mediates the biosynthesis of azaphilones, a class of fungal metabolites characterized by a highly oxygenated pyrano-quinone bicyclic core and exhibiting a broad range of bioactivities. In the first step, the non-reducing polyketide synthase azaA forms the hexaketide precursor from successive condensations of five malonyl-CoA units, presumably with a simple acetyl-CoA starter unit. The reactive polyketide chain then undergoes a PT-mediated C2-C7 cyclization to afford the aromatic ring and is eventually released as an aldehyde through the R-domain. The putative ketoreductase azaE is proposed to catalyze the reduction of the terminal ketone resulting in the early culture product FK17-P2a. The monooxygenase azaH was demonstrated to be the only enzyme required to convert FK17-P2a to azanigerone E. AzaH first hydroxylates the benzaldehyde intermediate FK17-P2a at C4, which triggers the formation of the pyran-ring to afford azanigerone E. In parallel, the 2,4-dimethylhexanoyl chain is synthesized by the HR-PKS azaB and is proposed to be transferred to the C4-hydroxyl of azanigerone E by the acyltransferase azaD directly from the ACP domain of azaB. Alternatively, the 2,4-dimethyl-hexanoyl chain may be offloaded from the HR-PKS as a carboxylic acid and converted to an acyl-CoA by azaF. The resulting acyl-CoA molecule could then be taken up as a substrate by AzaD to form azanigerone B. To yield the carboxylic acid substituent in azanigerone A, the hydroxypropyl side chain of azanigerone B would need to undergo a C-C oxidative cleavage catalyzed by cytochrome P450 AzaI. AzaI is proposed to act on a vicinal diol that leads to a C-C bond scission either through an alkoxyradical intermediate or a peroxy complex. In the biosynthesis of azanigerone A, azanigerone B first undergoes hydroxylation at C10, possibly catalyzed by one of the two FAD-dependent monooxygenases encoded in the cluster, azaG or azaL, resulting in the vicinal diol azanigerone C. Oxidative cleavage of azanigerone C by azaI would yield the corresponding aldehyde derivative of azanigerone A. Finally, the dehydrogenase azaJ is proposed to convert the aldehyde functional group into the carboxylic acid, completing the conversion from azanigerone B to azanigerone A. Alternatively, the oxidation of aldehyde to carboxylic acid may be catalyzed by the same P450 enzyme azaI via consecutive oxidation or by endogenous alcohol dehydrogenase. The sequence is that of Probable esterase azaC from Aspergillus niger (strain ATCC 1015 / CBS 113.46 / FGSC A1144 / LSHB Ac4 / NCTC 3858a / NRRL 328 / USDA 3528.7).